A 1212-amino-acid chain; its full sequence is DNA-directed RNA polymerase subunit beta' (1212 aa).

Zn(2+) is bound by residues cysteine 60, cysteine 62, cysteine 75, and cysteine 78. Mg(2+) contacts are provided by aspartate 450, aspartate 452, and aspartate 454. Zn(2+) is bound by residues cysteine 819, cysteine 893, cysteine 900, and cysteine 903.

This sequence belongs to the RNA polymerase beta' chain family. As to quaternary structure, the RNAP catalytic core consists of 2 alpha, 1 beta, 1 beta' and 1 omega subunit. When a sigma factor is associated with the core the holoenzyme is formed, which can initiate transcription. Mg(2+) is required as a cofactor. Requires Zn(2+) as cofactor.

It catalyses the reaction RNA(n) + a ribonucleoside 5'-triphosphate = RNA(n+1) + diphosphate. Its function is as follows. DNA-dependent RNA polymerase catalyzes the transcription of DNA into RNA using the four ribonucleoside triphosphates as substrates. The sequence is that of DNA-directed RNA polymerase subunit beta' from Streptococcus thermophilus (strain ATCC BAA-491 / LMD-9).